Reading from the N-terminus, the 829-residue chain is Leucine--tRNA ligase (829 aa).

The short motif at 40 to 50 (PYPSGNIHMGH) is the 'HIGH' region element. Positions 581–585 (KMSKS) match the 'KMSKS' region motif. Lys-584 contacts ATP.

The protein belongs to the class-I aminoacyl-tRNA synthetase family.

It is found in the cytoplasm. It catalyses the reaction tRNA(Leu) + L-leucine + ATP = L-leucyl-tRNA(Leu) + AMP + diphosphate. In Oleidesulfovibrio alaskensis (strain ATCC BAA-1058 / DSM 17464 / G20) (Desulfovibrio alaskensis), this protein is Leucine--tRNA ligase.